The sequence spans 167 residues: Glutathione peroxidase-like peroxiredoxin 1 (167 aa).

C36 acts as the Cysteine sulfenic acid (-SOH) intermediate in catalysis. C36 and C82 are disulfide-bonded.

This sequence belongs to the glutathione peroxidase family. Monomer.

It localises to the peroxisome matrix. It is found in the mitochondrion outer membrane. The catalysed reaction is 2 glutathione + H2O2 = glutathione disulfide + 2 H2O. It catalyses the reaction a hydroperoxide + [thioredoxin]-dithiol = an alcohol + [thioredoxin]-disulfide + H2O. Glutathione peroxidase-like protein that protects cells from phospholipid hydroperoxides and nonphospholipid peroxides during oxidative stress. Has peroxidase activity using thioredoxin or glutathione as a reducing power. Involved in peroxisome formation. The protein is Glutathione peroxidase-like peroxiredoxin 1 of Saccharomyces cerevisiae (strain ATCC 204508 / S288c) (Baker's yeast).